The chain runs to 294 residues: N-acetylmuramic acid 6-phosphate etherase (294 aa).

The SIS domain occupies 56–219 (TSYSLKNGGR…STLSMVSVGK (164 aa)). Glutamate 84 functions as the Proton donor in the catalytic mechanism. Glutamate 115 is an active-site residue.

Belongs to the GCKR-like family. MurNAc-6-P etherase subfamily. As to quaternary structure, homodimer.

The catalysed reaction is N-acetyl-D-muramate 6-phosphate + H2O = N-acetyl-D-glucosamine 6-phosphate + (R)-lactate. The protein operates within amino-sugar metabolism; 1,6-anhydro-N-acetylmuramate degradation. It functions in the pathway amino-sugar metabolism; N-acetylmuramate degradation. Its pathway is cell wall biogenesis; peptidoglycan recycling. In terms of biological role, specifically catalyzes the cleavage of the D-lactyl ether substituent of MurNAc 6-phosphate, producing GlcNAc 6-phosphate and D-lactate. Together with AnmK, is also required for the utilization of anhydro-N-acetylmuramic acid (anhMurNAc) either imported from the medium or derived from its own cell wall murein, and thus plays a role in cell wall recycling. The polypeptide is N-acetylmuramic acid 6-phosphate etherase (Francisella tularensis subsp. novicida (strain U112)).